The primary structure comprises 213 residues: Adenylate kinase (213 aa).

Residue 10 to 15 (GAGKGT) participates in ATP binding. The interval 30 to 59 (STGNLLRDEVKSKTDLGVDIEKLISNGKFV) is NMP. AMP is bound by residues T31, R36, 57-59 (KFV), 85-88 (GYPR), and Q92. The interval 126–162 (GRMTCEKCNMTLNEYFNKEQIELHPCGVEHLKKRKDD) is LID. R127 contacts ATP. Positions 159 and 170 each coordinate AMP. Position 198 (G198) interacts with ATP.

The protein belongs to the adenylate kinase family. Monomer.

It is found in the cytoplasm. The enzyme catalyses AMP + ATP = 2 ADP. It participates in purine metabolism; AMP biosynthesis via salvage pathway; AMP from ADP: step 1/1. Its function is as follows. Catalyzes the reversible transfer of the terminal phosphate group between ATP and AMP. Plays an important role in cellular energy homeostasis and in adenine nucleotide metabolism. This chain is Adenylate kinase, found in Pelagibacter ubique (strain HTCC1062).